A 37-amino-acid chain; its full sequence is Antifungal protein 4 (37 aa).

Its subcellular location is the secreted. Its function is as follows. Possesses antifungal activity against P.infestans but not F.graminearum. This is Antifungal protein 4 from Malva parviflora (Little mallow).